Here is a 62-residue protein sequence, read N- to C-terminus: Photosystem II reaction center protein Z (62 aa).

The next 2 membrane-spanning stretches (helical) occupy residues 8–28 and 41–61; these read AVFALIATSSILLISVPVVFA and FSGTSLWIGLVFLVGILNSLI.

The protein belongs to the PsbZ family. PSII is composed of 1 copy each of membrane proteins PsbA, PsbB, PsbC, PsbD, PsbE, PsbF, PsbH, PsbI, PsbJ, PsbK, PsbL, PsbM, PsbT, PsbY, PsbZ, Psb30/Ycf12, at least 3 peripheral proteins of the oxygen-evolving complex and a large number of cofactors. It forms dimeric complexes.

It is found in the plastid. Its subcellular location is the chloroplast thylakoid membrane. Functionally, may control the interaction of photosystem II (PSII) cores with the light-harvesting antenna, regulates electron flow through the 2 photosystem reaction centers. PSII is a light-driven water plastoquinone oxidoreductase, using light energy to abstract electrons from H(2)O, generating a proton gradient subsequently used for ATP formation. In Gossypium barbadense (Sea Island cotton), this protein is Photosystem II reaction center protein Z.